The following is a 428-amino-acid chain: S-adenosylmethionine synthase (428 aa).

His14 lines the ATP pocket. Asp16 serves as a coordination point for Mg(2+). Residue Glu42 participates in K(+) binding. L-methionine contacts are provided by Glu55 and Gln98. The flexible loop stretch occupies residues 98–108 (QSGDINRGVER). ATP contacts are provided by residues 165–167 (DAK), 251–252 (KF), Asp260, 266–267 (RK), Ala283, and Lys287. L-methionine is bound at residue Asp260. Lys291 lines the L-methionine pocket.

The protein belongs to the AdoMet synthase family. As to quaternary structure, homotetramer; dimer of dimers. Requires Mg(2+) as cofactor. K(+) is required as a cofactor.

It is found in the cytoplasm. It catalyses the reaction L-methionine + ATP + H2O = S-adenosyl-L-methionine + phosphate + diphosphate. It participates in amino-acid biosynthesis; S-adenosyl-L-methionine biosynthesis; S-adenosyl-L-methionine from L-methionine: step 1/1. Catalyzes the formation of S-adenosylmethionine (AdoMet) from methionine and ATP. The overall synthetic reaction is composed of two sequential steps, AdoMet formation and the subsequent tripolyphosphate hydrolysis which occurs prior to release of AdoMet from the enzyme. The polypeptide is S-adenosylmethionine synthase (Parabacteroides distasonis (strain ATCC 8503 / DSM 20701 / CIP 104284 / JCM 5825 / NCTC 11152)).